Consider the following 380-residue polypeptide: Large ribosomal subunit protein mL38 (380 aa).

Residues methionine 1–glycine 26 constitute a mitochondrion transit peptide. The stretch at arginine 99 to threonine 127 forms a coiled coil.

This sequence belongs to the phosphatidylethanolamine-binding protein family. Mitochondrion-specific ribosomal protein mL38 subfamily. In terms of assembly, component of the mitochondrial large ribosomal subunit (mt-LSU). Mature mammalian 55S mitochondrial ribosomes consist of a small (28S) and a large (39S) subunit. The 28S small subunit contains a 12S ribosomal RNA (12S mt-rRNA) and 30 different proteins. The 39S large subunit contains a 16S rRNA (16S mt-rRNA), a copy of mitochondrial valine transfer RNA (mt-tRNA(Val)), which plays an integral structural role, and 52 different proteins. mL38 is located at the central protuberance.

It is found in the mitochondrion. The chain is Large ribosomal subunit protein mL38 (MRPL38) from Homo sapiens (Human).